The sequence spans 434 residues: Methylenetetrahydrofolate--tRNA-(uracil-5-)-methyltransferase TrmFO (434 aa).

10 to 15 (GAGLAG) is an FAD binding site.

Belongs to the MnmG family. TrmFO subfamily. It depends on FAD as a cofactor.

It localises to the cytoplasm. The catalysed reaction is uridine(54) in tRNA + (6R)-5,10-methylene-5,6,7,8-tetrahydrofolate + NADH + H(+) = 5-methyluridine(54) in tRNA + (6S)-5,6,7,8-tetrahydrofolate + NAD(+). It catalyses the reaction uridine(54) in tRNA + (6R)-5,10-methylene-5,6,7,8-tetrahydrofolate + NADPH + H(+) = 5-methyluridine(54) in tRNA + (6S)-5,6,7,8-tetrahydrofolate + NADP(+). Its function is as follows. Catalyzes the folate-dependent formation of 5-methyl-uridine at position 54 (M-5-U54) in all tRNAs. The protein is Methylenetetrahydrofolate--tRNA-(uracil-5-)-methyltransferase TrmFO of Bacillus cereus (strain ATCC 10987 / NRS 248).